The primary structure comprises 882 residues: Chondroitin sulfate synthase 3 (882 aa).

The Cytoplasmic segment spans residues 1–7 (MAVRSRR). Residues 8–28 (PWMSVALGLVLGFTAASWLIA) form a helical; Signal-anchor for type II membrane protein membrane-spanning segment. The Lumenal segment spans residues 29-882 (PRVAELSERK…LGVRYNRTLS (854 aa)). A disordered region spans residues 46 to 167 (SYYGRSAAGP…GDGGAAAPSA (122 aa)). Composition is skewed to low complexity over residues 59–69 (AQQPLPQPQSR) and 120–131 (GATGLPGAPAAE). Residues Asn155, Asn279, and Asn710 are each glycosylated (N-linked (GlcNAc...) asparagine). Residues Asp720 and His834 each coordinate a divalent metal cation. N-linked (GlcNAc...) asparagine glycosylation is present at Asn878.

The protein belongs to the chondroitin N-acetylgalactosaminyltransferase family. Requires Co(2+) as cofactor. Mn(2+) serves as cofactor. Cd(2+) is required as a cofactor. As to expression, detected at low levels in brain, cerebral cortex, uterus and small intestine.

The protein resides in the golgi apparatus. The protein localises to the golgi stack membrane. The enzyme catalyses 3-O-(beta-D-GlcA-(1-&gt;3)-beta-D-GalNAc-(1-&gt;4)-beta-D-GlcA-(1-&gt;3)-beta-D-Gal-(1-&gt;3)-beta-D-Gal-(1-&gt;4)-beta-D-Xyl)-L-seryl-[protein] + UDP-N-acetyl-alpha-D-galactosamine = 3-O-(beta-D-GalNAc-(1-&gt;4)-beta-D-GlcA-(1-&gt;3)-beta-D-GalNAc-(1-&gt;4)-beta-D-GlcA-(1-&gt;3)-beta-D-Gal-(1-&gt;3)-beta-D-Gal-(1-&gt;4)-beta-D-Xyl)-L-seryl-[protein] + UDP + H(+). It catalyses the reaction 3-O-{beta-D-GlcA-(1-&gt;3)-[beta-D-GalNAc-(1-&gt;4)-beta-D-GlcA-(1-&gt;3)](n)-beta-D-GalNAc-(1-&gt;4)-beta-D-GlcA-(1-&gt;3)-beta-D-Gal-(1-&gt;3)-beta-D-Gal-(1-&gt;4)-beta-D-Xyl}-L-seryl-[protein] + UDP-N-acetyl-alpha-D-galactosamine = 3-O-{[beta-D-GalNAc-(1-&gt;4)-beta-D-GlcA-(1-&gt;3)](n+1)-beta-D-GalNAc-(1-&gt;4)-beta-D-GlcA-(1-&gt;3)-beta-D-Gal-(1-&gt;3)-beta-D-Gal-(1-&gt;4)-beta-D-Xyl}-L-seryl-[protein] + UDP + H(+). The catalysed reaction is 3-O-(beta-D-GalNAc-(1-&gt;4)-beta-D-GlcA-(1-&gt;3)-beta-D-Gal-(1-&gt;3)-beta-D-Gal-(1-&gt;4)-beta-D-Xyl)-L-seryl-[protein] + UDP-alpha-D-glucuronate = 3-O-(beta-D-GlcA-(1-&gt;3)-beta-D-GalNAc-(1-&gt;4)-beta-D-GlcA-(1-&gt;3)-beta-D-Gal-(1-&gt;3)-beta-D-Gal-(1-&gt;4)-beta-D-Xyl)-L-seryl-[protein] + UDP + H(+). It carries out the reaction 3-O-{[beta-D-GalNAc-(1-&gt;4)-beta-D-GlcA-(1-&gt;3)](n)-beta-D-GalNAc-(1-&gt;4)-beta-D-GlcA-(1-&gt;3)-beta-D-Gal-(1-&gt;3)-beta-D-Gal-(1-&gt;4)-beta-D-Xyl}-L-seryl-[protein] + UDP-alpha-D-glucuronate = 3-O-{beta-D-GlcA-(1-&gt;3)-[beta-D-GalNAc-(1-&gt;4)-beta-D-GlcA-(1-&gt;3)](n)-beta-D-GalNAc-(1-&gt;4)-beta-D-GlcA-(1-&gt;3)-beta-D-Gal-(1-&gt;3)-beta-D-Gal-(1-&gt;4)-beta-D-Xyl}-L-seryl-[protein] + UDP + H(+). Has both beta-1,3-glucuronic acid and beta-1,4-N-acetylgalactosamine transferase activity. Transfers glucuronic acid (GlcUA) from UDP-GlcUA and N-acetylgalactosamine (GalNAc) from UDP-GalNAc to the non-reducing end of the elongating chondroitin polymer. Specific activity is much reduced compared to CHSY1. The chain is Chondroitin sulfate synthase 3 (CHSY3) from Homo sapiens (Human).